Reading from the N-terminus, the 152-residue chain is Protein Smg homolog (152 aa).

This sequence belongs to the Smg family.

The protein is Protein Smg homolog of Bordetella bronchiseptica (strain ATCC BAA-588 / NCTC 13252 / RB50) (Alcaligenes bronchisepticus).